A 176-amino-acid polypeptide reads, in one-letter code: Inner membrane-spanning protein YciB (176 aa).

6 helical membrane-spanning segments follow: residues 3–23, 24–44, 49–69, 81–101, 121–141, and 149–169; these read FLFD…WGIF, TATA…AFRH, TMLW…LVLH, LYWL…NNLI, VAWA…VHNF, and FKLF…SLWL.

It belongs to the YciB family.

It is found in the cell inner membrane. Plays a role in cell envelope biogenesis, maintenance of cell envelope integrity and membrane homeostasis. In Burkholderia lata (strain ATCC 17760 / DSM 23089 / LMG 22485 / NCIMB 9086 / R18194 / 383), this protein is Inner membrane-spanning protein YciB.